The primary structure comprises 205 residues: Myb-related protein 305 (205 aa).

HTH myb-type domains lie at 10-62 and 63-117; these read DVEV…LNYL and RPDV…QKHM. 2 consecutive DNA-binding regions (H-T-H motif) follow at residues 38–62 and 90–113; these read WNSLARSAGLKRTGKSCRLRWLNYL and WSKIAKTLPGRTDNEIKNYWRTRI.

In terms of tissue distribution, expressed only in flowers.

It localises to the nucleus. In terms of biological role, transcription factor. The chain is Myb-related protein 305 from Antirrhinum majus (Garden snapdragon).